The chain runs to 426 residues: Glutamyl-tRNA reductase (426 aa).

Substrate is bound by residues threonine 49–arginine 52, serine 109, glutamate 114–glutamine 116, and glutamine 120. The Nucleophile role is filled by cysteine 50. Glycine 189–serine 194 provides a ligand contact to NADP(+).

This sequence belongs to the glutamyl-tRNA reductase family. Homodimer.

The catalysed reaction is (S)-4-amino-5-oxopentanoate + tRNA(Glu) + NADP(+) = L-glutamyl-tRNA(Glu) + NADPH + H(+). Its pathway is porphyrin-containing compound metabolism; protoporphyrin-IX biosynthesis; 5-aminolevulinate from L-glutamyl-tRNA(Glu): step 1/2. It participates in porphyrin-containing compound metabolism; chlorophyll biosynthesis. Functionally, catalyzes the NADPH-dependent reduction of glutamyl-tRNA(Glu) to glutamate 1-semialdehyde (GSA). The polypeptide is Glutamyl-tRNA reductase (Thermosynechococcus vestitus (strain NIES-2133 / IAM M-273 / BP-1)).